Reading from the N-terminus, the 129-residue chain is Flagellar basal body rod protein FlgB (129 aa).

The protein belongs to the flagella basal body rod proteins family. The basal body constitutes a major portion of the flagellar organelle and consists of a number of rings mounted on a central rod. In Gram-negative bacteria, at least four rings, L, P, S and M are present, whereas Gram-positive bacteria lack the L and P rings. The rod consists of about 26 subunits of FlgG in the distal portion, and FlgB, FlgC and FlgF build up the proximal portion of the rod with about 6 subunits each. Rod assembly occurs by export via the flagellum-specific pathway of its constituent proteins and by their incorporation into the rod structure in the probable order of FlgB, FlgC, FlgF and FlgG. Another protein, FliE, also assembles onto the stable rod structure.

The protein localises to the bacterial flagellum basal body. Functionally, structural component of flagellum, the bacterial motility apparatus. Part of the rod structure of flagellar basal body. The polypeptide is Flagellar basal body rod protein FlgB (flgB) (Bacillus subtilis (strain 168)).